Consider the following 155-residue polypeptide: uncharacterized protein (155 aa).

Residues 1–23 (MTILSLSRFMLAGVLLASFNASA) form the signal peptide.

It to E.coli YfjT.

This is an uncharacterized protein from Escherichia coli (strain K12).